We begin with the raw amino-acid sequence, 430 residues long: Enolase (430 aa).

Q164 contacts (2R)-2-phosphoglycerate. Residue E208 is the Proton donor of the active site. 3 residues coordinate Mg(2+): D245, E288, and D315. Residues K340, R369, S370, and K391 each contribute to the (2R)-2-phosphoglycerate site. K340 (proton acceptor) is an active-site residue.

The protein belongs to the enolase family. It depends on Mg(2+) as a cofactor.

The protein resides in the cytoplasm. The protein localises to the secreted. It localises to the cell surface. The enzyme catalyses (2R)-2-phosphoglycerate = phosphoenolpyruvate + H2O. Its pathway is carbohydrate degradation; glycolysis; pyruvate from D-glyceraldehyde 3-phosphate: step 4/5. Catalyzes the reversible conversion of 2-phosphoglycerate (2-PG) into phosphoenolpyruvate (PEP). It is essential for the degradation of carbohydrates via glycolysis. This is Enolase from Pyrococcus furiosus (strain ATCC 43587 / DSM 3638 / JCM 8422 / Vc1).